Here is an 899-residue protein sequence, read N- to C-terminus: RNA-binding motif protein 25 (899 aa).

Residues 1-20 (MADESSSPATGDPNSQKPES) are compositionally biased toward polar residues. Residues 1 to 112 (MADESSSPAT…SMPQYQPQPG (112 aa)) form a disordered region. Residues 26 to 63 (IPNPNPNPSLTPPPPQQHSQPPVAPLVPPGPPYAPPAQ) are compositionally biased toward pro residues. The RRM domain occupies 204–281 (TTIYIGKIAT…QELLVNVNQA (78 aa)). Disordered stretches follow at residues 298–572 (KKAK…EQNL) and 611–778 (GESA…KESG). 2 stretches are compositionally biased toward basic and acidic residues: residues 317–340 (EQDK…KENI) and 354–372 (EADR…ERLK). Residues 375-384 (PLPPPPPPPA) show a composition bias toward pro residues. Over residues 430-505 (WSKRNDRRSR…QYEKEKEKEK (76 aa)) the composition is skewed to basic and acidic residues. Residues 434-578 (NDRRSRERGE…EQNLQQQQLD (145 aa)) are a coiled coil. Over residues 515–524 (YEEEEEEDDD) the composition is skewed to acidic residues. A Nuclear localization signal 1 motif is present at residues 526 to 533 (SRRRWHRA). Residues 533–568 (AALDERRRRQLREKEDDLADRLKEEEEVAEAKRSAE) show a composition bias toward basic and acidic residues. The span at 626–640 (GSGNESMAIDNNSGS) shows a compositional bias: polar residues. Composition is skewed to basic and acidic residues over residues 723-733 (PKEETIETEKQ) and 740-778 (DKAS…KESG). A Nuclear localization signal 2 motif is present at residues 735–742 (SRRSHDKA). The 98-residue stretch at 802–899 (EDLFSYEINW…EAGVPVKSKA (98 aa)) folds into the PWI domain.

In terms of assembly, specifically associates with functional splicing complexes. Associates with exon junction complex (EJC) proteins. Phosphorylated; the phosphorylation level is repressed by abscisic acid (ABA).

It localises to the nucleus. In terms of biological role, RNA-binding protein that acts as a regulator of alternative pre-mRNA splicing. Negative regulator of responses to abscisic acid (ABA), including in early development. This Arabidopsis thaliana (Mouse-ear cress) protein is RNA-binding motif protein 25.